Consider the following 179-residue polypeptide: Large ribosomal subunit protein uL5 (179 aa).

This sequence belongs to the universal ribosomal protein uL5 family. Part of the 50S ribosomal subunit; part of the 5S rRNA/L5/L18/L25 subcomplex. Contacts the 5S rRNA and the P site tRNA. Forms a bridge to the 30S subunit in the 70S ribosome.

In terms of biological role, this is one of the proteins that bind and probably mediate the attachment of the 5S RNA into the large ribosomal subunit, where it forms part of the central protuberance. In the 70S ribosome it contacts protein S13 of the 30S subunit (bridge B1b), connecting the 2 subunits; this bridge is implicated in subunit movement. Contacts the P site tRNA; the 5S rRNA and some of its associated proteins might help stabilize positioning of ribosome-bound tRNAs. The chain is Large ribosomal subunit protein uL5 from Lysinibacillus sphaericus (strain C3-41).